Here is a 76-residue protein sequence, read N- to C-terminus: Sec-independent protein translocase protein TatA (76 aa).

A helical transmembrane segment spans residues 1–21; the sequence is MGSFSIWHWLIVLVIVALVFG. Composition is skewed to basic and acidic residues over residues 39-50 and 64-76; these read FKDGMKGEDDKP and GTVD…KSNS. The disordered stretch occupies residues 39-76; sequence FKDGMKGEDDKPAAQNAAPSQVADKGTVDVEVKEKSNS.

The protein belongs to the TatA/E family. As to quaternary structure, the Tat system comprises two distinct complexes: a TatABC complex, containing multiple copies of TatA, TatB and TatC subunits, and a separate TatA complex, containing only TatA subunits. Substrates initially bind to the TatABC complex, which probably triggers association of the separate TatA complex to form the active translocon.

It is found in the cell inner membrane. Part of the twin-arginine translocation (Tat) system that transports large folded proteins containing a characteristic twin-arginine motif in their signal peptide across membranes. TatA could form the protein-conducting channel of the Tat system. This Herminiimonas arsenicoxydans protein is Sec-independent protein translocase protein TatA.